A 217-amino-acid polypeptide reads, in one-letter code: Imidazole glycerol phosphate synthase subunit HisH (217 aa).

The Glutamine amidotransferase type-1 domain occupies Q6–Q214. Catalysis depends on C84, which acts as the Nucleophile. Active-site residues include H189 and E191.

As to quaternary structure, heterodimer of HisH and HisF.

It localises to the cytoplasm. The catalysed reaction is 5-[(5-phospho-1-deoxy-D-ribulos-1-ylimino)methylamino]-1-(5-phospho-beta-D-ribosyl)imidazole-4-carboxamide + L-glutamine = D-erythro-1-(imidazol-4-yl)glycerol 3-phosphate + 5-amino-1-(5-phospho-beta-D-ribosyl)imidazole-4-carboxamide + L-glutamate + H(+). It catalyses the reaction L-glutamine + H2O = L-glutamate + NH4(+). It functions in the pathway amino-acid biosynthesis; L-histidine biosynthesis; L-histidine from 5-phospho-alpha-D-ribose 1-diphosphate: step 5/9. Functionally, IGPS catalyzes the conversion of PRFAR and glutamine to IGP, AICAR and glutamate. The HisH subunit catalyzes the hydrolysis of glutamine to glutamate and ammonia as part of the synthesis of IGP and AICAR. The resulting ammonia molecule is channeled to the active site of HisF. This chain is Imidazole glycerol phosphate synthase subunit HisH, found in Synechococcus sp. (strain ATCC 27144 / PCC 6301 / SAUG 1402/1) (Anacystis nidulans).